We begin with the raw amino-acid sequence, 157 residues long: MNYEIKQEEKRTVAGFHLVGPWEQTVKKGFEQLMMWVDSKNIVPKEWVAVYYDNPDETPAEKLRCDTVVTVPGYFTLPENSEGVILTEITGGQYAVAVARVVGDDFAKPWYQFFNSLLQDSAYEMLPKPCFEVYLNNGAEDGYWDIEMYVAVQPKHH.

Belongs to the DNA gyrase inhibitor family. Interacts with DNA gyrase.

Its subcellular location is the cytoplasm. In terms of biological role, inhibits the supercoiling activity of DNA gyrase. Acts by inhibiting DNA gyrase at an early step, prior to (or at the step of) binding of DNA by the gyrase. It protects cells against toxins that target DNA gyrase, by inhibiting activity of these toxins and reducing the formation of lethal double-strand breaks in the cell. The protein is DNA gyrase inhibitor of Shigella boydii serotype 18 (strain CDC 3083-94 / BS512).